A 310-amino-acid chain; its full sequence is Bifunctional phosphoglucose/phosphomannose isomerase (310 aa).

Residues 22-152 (FDGSFRTGTF…IRPKHEDIEE (131 aa)) form the SIS domain. Gly41, Ser42, Ser80, Ser82, Thr85, and Arg128 together coordinate D-fructose 6-phosphate. Residue Glu202 is the Proton acceptor of the active site. D-fructose 6-phosphate-binding residues include His218 and Lys306. His218 acts as the Proton donor in catalysis. Lys306 acts as the Proton acceptor in catalysis.

The protein belongs to the PGI/PMI family. Homodimer.

It catalyses the reaction alpha-D-glucose 6-phosphate = beta-D-fructose 6-phosphate. The catalysed reaction is D-mannose 6-phosphate = D-fructose 6-phosphate. With respect to regulation, inhibited by low concentrations of erythrose 4-phosphate and 6-phosphogluconate. Its function is as follows. Dual specificity isomerase that catalyzes the isomerization of both glucose-6-phosphate and mannose-6-phosphate to fructose-6-phosphate with similar catalytic efficiency. The polypeptide is Bifunctional phosphoglucose/phosphomannose isomerase (Thermoplasma acidophilum (strain ATCC 25905 / DSM 1728 / JCM 9062 / NBRC 15155 / AMRC-C165)).